A 250-amino-acid chain; its full sequence is Ubiquinone/menaquinone biosynthesis C-methyltransferase UbiE (250 aa).

S-adenosyl-L-methionine contacts are provided by residues T73, D94, and 122-123; that span reads DA.

Belongs to the class I-like SAM-binding methyltransferase superfamily. MenG/UbiE family.

The catalysed reaction is a 2-demethylmenaquinol + S-adenosyl-L-methionine = a menaquinol + S-adenosyl-L-homocysteine + H(+). It catalyses the reaction a 2-methoxy-6-(all-trans-polyprenyl)benzene-1,4-diol + S-adenosyl-L-methionine = a 5-methoxy-2-methyl-3-(all-trans-polyprenyl)benzene-1,4-diol + S-adenosyl-L-homocysteine + H(+). The protein operates within quinol/quinone metabolism; menaquinone biosynthesis; menaquinol from 1,4-dihydroxy-2-naphthoate: step 2/2. It participates in cofactor biosynthesis; ubiquinone biosynthesis. Functionally, methyltransferase required for the conversion of demethylmenaquinol (DMKH2) to menaquinol (MKH2) and the conversion of 2-polyprenyl-6-methoxy-1,4-benzoquinol (DDMQH2) to 2-polyprenyl-3-methyl-6-methoxy-1,4-benzoquinol (DMQH2). This Coxiella burnetii (strain CbuK_Q154) (Coxiella burnetii (strain Q154)) protein is Ubiquinone/menaquinone biosynthesis C-methyltransferase UbiE.